Here is a 297-residue protein sequence, read N- to C-terminus: Large ribosomal subunit protein uL18 (297 aa).

Belongs to the universal ribosomal protein uL18 family. In terms of assembly, component of the large ribosomal subunit (LSU).

It is found in the cytoplasm. Its subcellular location is the nucleus. In terms of biological role, component of the ribosome, a large ribonucleoprotein complex responsible for the synthesis of proteins in the cell. The small ribosomal subunit (SSU) binds messenger RNAs (mRNAs) and translates the encoded message by selecting cognate aminoacyl-transfer RNA (tRNA) molecules. The large subunit (LSU) contains the ribosomal catalytic site termed the peptidyl transferase center (PTC), which catalyzes the formation of peptide bonds, thereby polymerizing the amino acids delivered by tRNAs into a polypeptide chain. The nascent polypeptides leave the ribosome through a tunnel in the LSU and interact with protein factors that function in enzymatic processing, targeting, and the membrane insertion of nascent chains at the exit of the ribosomal tunnel. This Aedes aegypti (Yellowfever mosquito) protein is Large ribosomal subunit protein uL18 (RpL5).